Reading from the N-terminus, the 54-residue chain is Potassium channel toxin alpha-KTx 14.2 (54 aa).

The signal sequence occupies residues methionine 1–glycine 23. Intrachain disulfides connect cysteine 30–cysteine 46, cysteine 36–cysteine 51, and cysteine 40–cysteine 53.

It belongs to the short scorpion toxin superfamily. Potassium channel inhibitor family. Alpha-KTx 14 subfamily. As to expression, expressed by the venom gland.

Its subcellular location is the secreted. In terms of biological role, inhibits potassium channels. May be active towards small conductance calcium-activated potassium channels (KCNN, SK), and less active towards voltage-gated potassium channels (Kv/KCN). In Olivierus martensii (Manchurian scorpion), this protein is Potassium channel toxin alpha-KTx 14.2.